The chain runs to 834 residues: Inner nuclear membrane protein SRC1 (834 aa).

The interval 68–292 is disordered; sequence DEGIVKMDRP…TANGTGHSTP (225 aa). The segment covering 77–86 has biased composition (low complexity); it reads PSSSPSIASP. A phosphoserine mark is found at Ser78, Ser80, and Ser85. Composition is skewed to acidic residues over residues 114–127 and 142–153; these read VSND…DDDD and DTDEVDDEEDDV. The span at 154 to 170 shows a compositional bias: polar residues; it reads ITSSSNKSDTNDFQQNS. Ser181 carries the post-translational modification Phosphoserine. The span at 188-198 shows a compositional bias: basic and acidic residues; it reads NSKENKIDNKH. Phosphoserine occurs at positions 203, 204, and 206. Polar residues predominate over residues 243-266; sequence IKNTNRKPVSMDNFNDSLTSSGTE. Ser301 carries the post-translational modification Phosphoserine. Residues 307 to 364 are disordered; that stretch reads PQKEVPSTILVPEVEQQEPSQSERTPSLFSSEGSGSESEAPLLPEITTPGPHQPMGNT. Composition is skewed to low complexity over residues 317-329 and 336-345; these read VPEV…SQSE and SSEGSGSESE. Thr394 carries the post-translational modification Phosphothreonine. A Phosphoserine modification is found at Ser427. A run of 2 helical transmembrane segments spans residues 455–475 and 708–728; these read LLAL…GLWY and IWLM…LKNY.

It localises to the nucleus inner membrane. Plays a role in sister chromatid separation. This is Inner nuclear membrane protein SRC1 (SRC1) from Saccharomyces cerevisiae (strain ATCC 204508 / S288c) (Baker's yeast).